A 366-amino-acid chain; its full sequence is 3-dehydroquinate synthase (366 aa).

NAD(+) contacts are provided by residues 69–74, 103–107, 127–128, lysine 140, and lysine 149; these read DGEAYK, GVIGD, and TT. Zn(2+)-binding residues include glutamate 182, histidine 245, and histidine 262.

Belongs to the sugar phosphate cyclases superfamily. Dehydroquinate synthase family. The cofactor is Co(2+). Zn(2+) serves as cofactor. Requires NAD(+) as cofactor.

The protein localises to the cytoplasm. The enzyme catalyses 7-phospho-2-dehydro-3-deoxy-D-arabino-heptonate = 3-dehydroquinate + phosphate. It participates in metabolic intermediate biosynthesis; chorismate biosynthesis; chorismate from D-erythrose 4-phosphate and phosphoenolpyruvate: step 2/7. In terms of biological role, catalyzes the conversion of 3-deoxy-D-arabino-heptulosonate 7-phosphate (DAHP) to dehydroquinate (DHQ). This Pseudomonas fluorescens (strain ATCC BAA-477 / NRRL B-23932 / Pf-5) protein is 3-dehydroquinate synthase.